A 410-amino-acid polypeptide reads, in one-letter code: Argininosuccinate synthase (410 aa).

ATP is bound by residues 11–19 (AYSGGLDTS) and A37. Positions 88 and 93 each coordinate L-citrulline. Residue 116-124 (SHGCTGKGN) coordinates ATP. T120, N124, and D125 together coordinate L-aspartate. L-citrulline is bound at residue N124. L-citrulline contacts are provided by R128, S181, S190, E269, and Y281.

Belongs to the argininosuccinate synthase family. Type 1 subfamily. As to quaternary structure, homotetramer.

The protein resides in the cytoplasm. The enzyme catalyses L-citrulline + L-aspartate + ATP = 2-(N(omega)-L-arginino)succinate + AMP + diphosphate + H(+). Its pathway is amino-acid biosynthesis; L-arginine biosynthesis; L-arginine from L-ornithine and carbamoyl phosphate: step 2/3. In Schizosaccharomyces pombe (strain 972 / ATCC 24843) (Fission yeast), this protein is Argininosuccinate synthase (arg12).